The sequence spans 502 residues: Chlorophyllide reductase 52.5 kDa chain (502 aa).

Helical transmembrane passes span 70–87, 131–147, and 221–238; these read VGTI…LSFV, AIVV…GVPL, and VMIG…GPVV.

Belongs to the BchN/ChlN family. As to quaternary structure, chlorophyllide reductase is composed of three subunits; BchX, BchY and BchZ. Forms a heterodimer of one BchY and one BchZ subunit.

The protein localises to the cell membrane. It carries out the reaction 3-deacetyl-3-vinylbacteriochlorophyllide a + 2 oxidized [2Fe-2S]-[ferredoxin] + ADP + phosphate = chlorophyllide a + 2 reduced [2Fe-2S]-[ferredoxin] + ATP + H2O + H(+). It catalyses the reaction bacteriochlorophyllide a + 2 oxidized [2Fe-2S]-[ferredoxin] + ADP + phosphate = 3-acetyl-3-devinylchlorophyllide a + 2 reduced [2Fe-2S]-[ferredoxin] + ATP + H2O + H(+). The enzyme catalyses 3-deacetyl-3-(1-hydroxyethyl)bacteriochlorophyllide a + 2 oxidized [2Fe-2S]-[ferredoxin] + ADP + phosphate = 3-devinyl-3-(1-hydroxyethyl)chlorophyllide a + 2 reduced [2Fe-2S]-[ferredoxin] + ATP + H2O + H(+). It functions in the pathway porphyrin-containing compound metabolism; bacteriochlorophyll biosynthesis (light-independent). Converts chlorophylls (Chl) into bacteriochlorophylls (BChl) by reducing ring B of the tetrapyrrole. The chain is Chlorophyllide reductase 52.5 kDa chain (bchY) from Cereibacter sphaeroides (strain ATCC 17023 / DSM 158 / JCM 6121 / CCUG 31486 / LMG 2827 / NBRC 12203 / NCIMB 8253 / ATH 2.4.1.) (Rhodobacter sphaeroides).